The chain runs to 124 residues: uncharacterized protein (124 aa).

The protein localises to the cytoplasm. The protein resides in the nucleus. This is an uncharacterized protein from Schizosaccharomyces pombe (strain 972 / ATCC 24843) (Fission yeast).